A 73-amino-acid polypeptide reads, in one-letter code: MSAETASGPTEDQVEILEYNFNKVDKHPDSTTLCLIAAEAGLSEEETQKWFKQRLAKWRRSEGLPSECRSVTD.

Residues 3–62 (AETASGPTEDQVEILEYNFNKVDKHPDSTTLCLIAAEAGLSEEETQKWFKQRLAKWRRSE) constitute a DNA-binding region (homeobox; degenerate).

As to quaternary structure, interacts with serum response factor (SRF). Component of a large complex containing histone deacetylases such as HDAC2. Interacts with the acetylated forms of HSPA1A and HSPA1B. Interacts with HSPA8. As to expression, widely expressed. Expressed in the heart, brain, placenta, lung, skeletal and smooth muscles, uterus, urinary bladder, kidney and spleen. Down-regulated in some types of cancer such as lung cancer, choriocarcinoma, head and neck squamous cell carcinoma and oral squamous cell carcinoma.

It localises to the nucleus. Its subcellular location is the cytoplasm. Its function is as follows. Atypical homeodomain protein which does not bind DNA and is required to modulate cardiac growth and development. Acts via its interaction with SRF, thereby modulating the expression of SRF-dependent cardiac-specific genes and cardiac development. Prevents SRF-dependent transcription either by inhibiting SRF binding to DNA or by recruiting histone deacetylase (HDAC) proteins that prevent transcription by SRF. Overexpression causes cardiac hypertrophy. May act as a tumor suppressor. Acts as a co-chaperone for HSPA1A and HSPA1B chaperone proteins and assists in chaperone-mediated protein refolding. This is Homeodomain-only protein (HOPX) from Homo sapiens (Human).